The sequence spans 79 residues: Protein GOLVEN 2 (79 aa).

The signal sequence occupies residues 1–26 (MAIRVSHKSFLVALLLILFISSPTQA). The propeptide occupies 27–65 (RSLREVVRNRTLLVVEKSQESRKIRHEGGGSDVDGLMDM). Residues 49-79 (KIRHEGGGSDVDGLMDMDYNSANKKRPIHNR) are disordered. Tyrosine 67 is subject to Sulfotyrosine. Proline 75 carries the post-translational modification Hydroxyproline.

Belongs to the RGF family. In terms of assembly, binds to LRR receptor-like serine/threonine-protein kinases to trigger their dimerization with SERK proteins and subsequent signaling. As to expression, expressed in siliques, stems, hypocotyls, shoot apex, leaves, flowers and cotyledons, and, to a lower extent, in roots.

It localises to the secreted. It is found in the endoplasmic reticulum. Signaling peptide (root growth factor) that regulates the pattern of root growth and lateral root development by modulating the length and the number of cortical cells in the root apical meristem (RAM), and the anticlinal asymmetric cell divisions in lateral root initiation cells. Also involved in the regulation of hypocotyl bending and root gravitropism, probably by influencing the formation of auxin gradients. Maintains the postembryonic root stem cell niche. This Arabidopsis thaliana (Mouse-ear cress) protein is Protein GOLVEN 2.